A 177-amino-acid chain; its full sequence is Shikimate kinase (177 aa).

An ATP-binding site is contributed by 17-22 (GVGKTT). Position 21 (Thr21) interacts with Mg(2+). Substrate contacts are provided by Asp39, Arg63, and Gly86. Arg125 is an ATP binding site. A substrate-binding site is contributed by Arg143. Arg159 is a binding site for ATP.

This sequence belongs to the shikimate kinase family. Monomer. Mg(2+) serves as cofactor.

It localises to the cytoplasm. The catalysed reaction is shikimate + ATP = 3-phosphoshikimate + ADP + H(+). Its pathway is metabolic intermediate biosynthesis; chorismate biosynthesis; chorismate from D-erythrose 4-phosphate and phosphoenolpyruvate: step 5/7. Functionally, catalyzes the specific phosphorylation of the 3-hydroxyl group of shikimic acid using ATP as a cosubstrate. The chain is Shikimate kinase from Bacillus licheniformis (strain ATCC 14580 / DSM 13 / JCM 2505 / CCUG 7422 / NBRC 12200 / NCIMB 9375 / NCTC 10341 / NRRL NRS-1264 / Gibson 46).